Consider the following 194-residue polypeptide: MISSLNGILEASGKDWAVINVSGVGFRCYMPATSPALIGGLGQRVRVFTHLHVREDALSLFGFATTEELSLFETLIDVSGIGPKLGLAMLSVMNAEALASAIISGNAELLSTIPGIGKKTSSRIILELKDKIAKNWEAGVLSQVTEANSDILATLTALGYSSSEAAKAISSLGDNGDLPLEERIKLALNYFNNK.

A domain I region spans residues 1–64; that stretch reads MISSLNGILE…EDALSLFGFA (64 aa). Positions 65-143 are domain II; it reads TTEELSLFET…KNWEAGVLSQ (79 aa). The flexible linker stretch occupies residues 144-149; that stretch reads VTEANS. Residues 149–194 form a domain III region; it reads SDILATLTALGYSSSEAAKAISSLGDNGDLPLEERIKLALNYFNNK.

The protein belongs to the RuvA family. Homotetramer. Forms an RuvA(8)-RuvB(12)-Holliday junction (HJ) complex. HJ DNA is sandwiched between 2 RuvA tetramers; dsDNA enters through RuvA and exits via RuvB. An RuvB hexamer assembles on each DNA strand where it exits the tetramer. Each RuvB hexamer is contacted by two RuvA subunits (via domain III) on 2 adjacent RuvB subunits; this complex drives branch migration. In the full resolvosome a probable DNA-RuvA(4)-RuvB(12)-RuvC(2) complex forms which resolves the HJ.

It is found in the cytoplasm. The RuvA-RuvB-RuvC complex processes Holliday junction (HJ) DNA during genetic recombination and DNA repair, while the RuvA-RuvB complex plays an important role in the rescue of blocked DNA replication forks via replication fork reversal (RFR). RuvA specifically binds to HJ cruciform DNA, conferring on it an open structure. The RuvB hexamer acts as an ATP-dependent pump, pulling dsDNA into and through the RuvAB complex. HJ branch migration allows RuvC to scan DNA until it finds its consensus sequence, where it cleaves and resolves the cruciform DNA. This Dehalococcoides mccartyi (strain CBDB1) protein is Holliday junction branch migration complex subunit RuvA.